We begin with the raw amino-acid sequence, 828 residues long: E3 ubiquitin-protein ligase bre-1 (828 aa).

Positions 1-25 (MMKRNNEGIGGEGVANSPPDDTQQK) are disordered. An interaction with ubc-1 region spans residues 1–309 (MMKRNNEGIG…SREIEALRAD (309 aa)). Coiled-coil stretches lie at residues 53 to 92 (QAAKLRQTVLIKNKRISDLERENERAKRRQLTDESNFLKV) and 185 to 251 (HKEL…TEKQ). Positions 269–298 (ASGNATASSSATLNQSEKKMGSPGSPPSES) are enriched in low complexity. The disordered stretch occupies residues 269-304 (ASGNATASSSATLNQSEKKMGSPGSPPSESTSREIE). 3 coiled-coil regions span residues 311–345 (DEQAAIAARRLQELEDTNRKLQSMAQDISKLKMET), 460–616 (VNTL…RNLK), and 660–756 (DEVL…NDSA). The RING-type zinc finger occupies 776–815 (CPSCKTRPKDCIMLKCYHLFCETCIKTMYDTRQRKCPKCN).

This sequence belongs to the BRE1 family. As to quaternary structure, interacts with ubc-1. Interacts with mrg-1.

It localises to the nucleus. The enzyme catalyses S-ubiquitinyl-[E2 ubiquitin-conjugating enzyme]-L-cysteine + [acceptor protein]-L-lysine = [E2 ubiquitin-conjugating enzyme]-L-cysteine + N(6)-ubiquitinyl-[acceptor protein]-L-lysine.. Its pathway is protein modification; protein ubiquitination. Its function is as follows. E3 ubiquitin-protein ligase that mediates monoubiquitination of 'Lys-117' of histone H2B. H2B 'Lys-117' ubiquitination gives a specific tag for epigenetic transcriptional activation and is also prerequisite for histone H3 'Lys-4' and 'Lys-79' methylation. Involved in regulating stem cell proliferative fate. This is E3 ubiquitin-protein ligase bre-1 from Caenorhabditis briggsae.